The primary structure comprises 225 residues: NAD(P)H-quinone oxidoreductase subunit K, chloroplastic (225 aa).

4 residues coordinate [4Fe-4S] cluster: Cys43, Cys44, Cys108, and Cys139.

The protein belongs to the complex I 20 kDa subunit family. In terms of assembly, NDH is composed of at least 16 different subunits, 5 of which are encoded in the nucleus. The cofactor is [4Fe-4S] cluster.

The protein resides in the plastid. Its subcellular location is the chloroplast thylakoid membrane. The catalysed reaction is a plastoquinone + NADH + (n+1) H(+)(in) = a plastoquinol + NAD(+) + n H(+)(out). It carries out the reaction a plastoquinone + NADPH + (n+1) H(+)(in) = a plastoquinol + NADP(+) + n H(+)(out). Functionally, NDH shuttles electrons from NAD(P)H:plastoquinone, via FMN and iron-sulfur (Fe-S) centers, to quinones in the photosynthetic chain and possibly in a chloroplast respiratory chain. The immediate electron acceptor for the enzyme in this species is believed to be plastoquinone. Couples the redox reaction to proton translocation, and thus conserves the redox energy in a proton gradient. The sequence is that of NAD(P)H-quinone oxidoreductase subunit K, chloroplastic from Lemna minor (Common duckweed).